The following is a 558-amino-acid chain: Protein NRT1/ PTR FAMILY 2.7 (558 aa).

12 helical membrane passes run 31–51 (FMIA…LNLI), 63–83 (IAAA…PAVA), 90–110 (FFGT…GVAL), 140–162 (LGVL…FTLA), 178–198 (FFNW…TAIV), 204–224 (ISWT…FLVF), 319–339 (IIPL…QLSL), 357–377 (IPAG…IIVN), 399–419 (VGIG…VEAK), 440–460 (VLWL…HFPG), 479–499 (SITS…IDLI), and 518–538 (VYWI…VCSW).

Belongs to the major facilitator superfamily. Proton-dependent oligopeptide transporter (POT/PTR) (TC 2.A.17) family. In terms of tissue distribution, expressed in shoots and in the cortex of mature roots. Not expressed in root tip meristematic cells.

The protein resides in the cell membrane. In terms of biological role, transporter involved in a passive nitrate efflux. Not competent for chloride transport. In Arabidopsis thaliana (Mouse-ear cress), this protein is Protein NRT1/ PTR FAMILY 2.7 (NPF2.7).